The sequence spans 200 residues: Dephospho-CoA kinase (200 aa).

Residues T4–K200 enclose the DPCK domain. A12–T17 is a binding site for ATP.

The protein belongs to the CoaE family.

The protein localises to the cytoplasm. It carries out the reaction 3'-dephospho-CoA + ATP = ADP + CoA + H(+). Its pathway is cofactor biosynthesis; coenzyme A biosynthesis; CoA from (R)-pantothenate: step 5/5. In terms of biological role, catalyzes the phosphorylation of the 3'-hydroxyl group of dephosphocoenzyme A to form coenzyme A. In Listeria monocytogenes serotype 4b (strain F2365), this protein is Dephospho-CoA kinase.